The sequence spans 94 residues: Co-chaperonin GroES (94 aa).

Belongs to the GroES chaperonin family. In terms of assembly, heptamer of 7 subunits arranged in a ring. Interacts with the chaperonin GroEL.

The protein resides in the cytoplasm. In terms of biological role, together with the chaperonin GroEL, plays an essential role in assisting protein folding. The GroEL-GroES system forms a nano-cage that allows encapsulation of the non-native substrate proteins and provides a physical environment optimized to promote and accelerate protein folding. GroES binds to the apical surface of the GroEL ring, thereby capping the opening of the GroEL channel. The polypeptide is Co-chaperonin GroES (Clostridium botulinum (strain Alaska E43 / Type E3)).